A 565-amino-acid polypeptide reads, in one-letter code: Membrane protein insertase YidC (565 aa).

The next 6 membrane-spanning stretches (helical) occupy residues 6–26, 348–368, 370–390, 437–457, 479–499, and 516–536; these read VLLI…WGKN, LMAL…SLLH, WGWA…PLSA, GGCF…WVLV, PYFI…KLTP, and PLIF…YWVI.

Belongs to the OXA1/ALB3/YidC family. Type 1 subfamily. Interacts with the Sec translocase complex via SecD. Specifically interacts with transmembrane segments of nascent integral membrane proteins during membrane integration.

The protein localises to the cell inner membrane. In terms of biological role, required for the insertion and/or proper folding and/or complex formation of integral membrane proteins into the membrane. Involved in integration of membrane proteins that insert both dependently and independently of the Sec translocase complex, as well as at least some lipoproteins. Aids folding of multispanning membrane proteins. The protein is Membrane protein insertase YidC of Xylella fastidiosa (strain M12).